The chain runs to 572 residues: M-phase inducer phosphatase 3 (572 aa).

Disordered stretches follow at residues 95 to 117 (NLGD…GKLE) and 304 to 354 (SPSM…QRRG). The region spanning 420–527 (LVEKFFIIDC…FFPEYKELCE (108 aa)) is the Rhodanese domain. C476 is an active-site residue.

This sequence belongs to the MPI phosphatase family.

It carries out the reaction O-phospho-L-tyrosyl-[protein] + H2O = L-tyrosyl-[protein] + phosphate. In terms of biological role, this protein functions as a dosage-dependent inducer in mitotic control. It is a tyrosine protein phosphatase required for progression of the cell cycle. It may directly dephosphorylate p34(cdc2) and activate the p34(cdc2) kinase activity. The chain is M-phase inducer phosphatase 3 (cdc25-3) from Xenopus laevis (African clawed frog).